Here is a 460-residue protein sequence, read N- to C-terminus: Cation efflux system protein CusC (460 aa).

Positions 1–17 (MSPCKLLPFCVALALTG) are cleaved as a signal peptide. Residue C18 is the site of N-palmitoyl cysteine attachment. C18 carries the S-diacylglycerol cysteine lipid modification.

This sequence belongs to the outer membrane factor (OMF) (TC 1.B.17) family. Homotrimer. Component of the cus efflux system composed of CusA, CusB, CusC and CusF.

It is found in the cell outer membrane. Its function is as follows. Forms pores that allow passive diffusion of cations across the outer membrane. Part of a cation efflux system that mediates resistance to copper and silver. The protein is Cation efflux system protein CusC (cusC) of Escherichia coli O6:H1 (strain CFT073 / ATCC 700928 / UPEC).